Reading from the N-terminus, the 1066-residue chain is Protein sts5 (1066 aa).

Residues 18 to 28 (QQDPSDAQSSP) are compositionally biased toward low complexity. Disordered stretches follow at residues 18 to 40 (QQDP…SLTT), 154 to 178 (ATST…SPNS), and 247 to 286 (SNFR…RKNL). Residues 29 to 40 (TFVPSANPSLTT) are compositionally biased toward polar residues. Phosphothreonine is present on threonine 157. Residues 168–178 (HSVASVSSPNS) show a composition bias toward low complexity. Threonine 262 carries the phosphothreonine modification. Serine 264 carries the post-translational modification Phosphoserine. Positions 270–280 (SGSGFSSGGSG) are enriched in gly residues. Residue threonine 377 is modified to Phosphothreonine. Residues 454-480 (SSAANKERQTSSGNQGSSNNSGNDKPK) are disordered. A compositionally biased stretch (low complexity) spans 464–476 (SSGNQGSSNNSGN). Residues 482 to 556 (VWFKPSDKRV…AQVSALLHDT (75 aa)) enclose the CSD2 domain. The RNB domain maps to 618 to 934 (NINSSSATDF…VHYQLQLLLR (317 aa)). The region spanning 983-1033 (QDGLVCFVAPSYFDVFFPSLGMEKRVHLDLLNLTHVRFEEDQGILSLYDES) is the DIS3L2 C-terminal domain.

It belongs to the RNR ribonuclease family. Interacts with serine/threonine phosphatase ppe1, protein kinase C and an osmosensing MAP kinase.

It is found in the cytoplasm. Required for the maintenance of cell shape during interphase. Required for localization of cortical actin to the growing tips before mitosis. The protein is Protein sts5 (sts5) of Schizosaccharomyces pombe (strain 972 / ATCC 24843) (Fission yeast).